The chain runs to 396 residues: MLDTQTIAIVKSTIPLLAATGPKLTAHFYERMFKHHPELKNIFNMSNQSSGDQREALFNAICAYATNIENLAALLPTVERIAQKHTSLNIQPEHYPIVGEHLIATLDELFSPGQAVLDAWAKAYGVLADVFIQRESQIYQQSETETGGWRTLRRFRIIKKEQQSEVICSFVLAPEDGGQVLHYKPGQYLGIYIEHESLEFQEIRQYSLTTAPNGKTYRIAVKREEQGTVSNLLHRELNEGDIVRIAPPRGDFFLDVSPDTPVALISAGVGQTPMLSMLNTLYSQQHAAPVHWLHAAENGRVHAFADEVSAIAAKMPNLSRHVWYREPDLQDKHGEDYHSQGLMDLSSYQWLADDPKRHYYFCGPLPFMQFIGRQLLAQGIAPEQIHYECFGPHKVI.

One can recognise a Globin domain in the interval 1–136 (MLDTQTIAIV…LADVFIQRES (136 aa)). His-85 contributes to the heme b binding site. Residues Tyr-95 and Glu-135 each act as charge relay system in the active site. The reductase stretch occupies residues 147-396 (GGWRTLRRFR…YECFGPHKVI (250 aa)). The 106-residue stretch at 150-255 (RTLRRFRIIK…APPRGDFFLD (106 aa)) folds into the FAD-binding FR-type domain. FAD-binding positions include Tyr-188 and 204–207 (RQYS). 268-273 (GVGQTP) contacts NADP(+). 389-392 (CFGP) provides a ligand contact to FAD.

The protein belongs to the globin family. Two-domain flavohemoproteins subfamily. In the C-terminal section; belongs to the flavoprotein pyridine nucleotide cytochrome reductase family. The cofactor is heme b. Requires FAD as cofactor.

The enzyme catalyses 2 nitric oxide + NADPH + 2 O2 = 2 nitrate + NADP(+) + H(+). It carries out the reaction 2 nitric oxide + NADH + 2 O2 = 2 nitrate + NAD(+) + H(+). In terms of biological role, is involved in NO detoxification in an aerobic process, termed nitric oxide dioxygenase (NOD) reaction that utilizes O(2) and NAD(P)H to convert NO to nitrate, which protects the bacterium from various noxious nitrogen compounds. Therefore, plays a central role in the inducible response to nitrosative stress. This chain is Flavohemoprotein, found in Yersinia pestis.